Here is a 186-residue protein sequence, read N- to C-terminus: Probable GPI-anchored cupredoxin ARB_05732-1 (186 aa).

The first 18 residues, 1–18, serve as a signal peptide directing secretion; that stretch reads MVNMNILTTVALAGLAAA. H55 serves as a coordination point for Cu cation. The cysteines at positions 66 and 104 are disulfide-linked. Residue N87 is glycosylated (N-linked (GlcNAc...) asparagine). Cu cation-binding residues include C98 and H103. The tract at residues 130 to 160 is disordered; it reads GAGNGQAPSRVNNGSSGSGTPTSGGAPAATS. N-linked (GlcNAc...) asparagine glycosylation is present at N142. The span at 143–160 shows a compositional bias: low complexity; sequence GSSGSGTPTSGGAPAATS. G153 is lipidated: GPI-anchor amidated glycine. Positions 154 to 186 are cleaved as a propeptide — removed in mature form; that stretch reads GAPAATSPNAASSLTFSGAAALVAMGGAWIGLL.

The protein belongs to the multicopper oxidase family. Cu cation serves as cofactor.

It is found in the cell membrane. The protein localises to the secreted. In terms of biological role, probable electron transfer copper protein that serves as a direct electron donor. This chain is Probable GPI-anchored cupredoxin ARB_05732-1, found in Arthroderma benhamiae (strain ATCC MYA-4681 / CBS 112371) (Trichophyton mentagrophytes).